The primary structure comprises 161 residues: Tropomyosin (161 aa).

Residues 1-161 adopt a coiled-coil conformation; sequence MDKLREKINA…DEVHQALEDL (161 aa). Residues 40–52 show a composition bias toward basic and acidic residues; sequence EQEYESLSRKSEA. Disordered stretches follow at residues 40–65 and 107–134; these read EQEY…EETK and EKMR…DDME.

In terms of assembly, homodimer.

Its subcellular location is the cytoplasm. It is found in the cytoskeleton. Forms part of the F-actin contractile ring during cytokinesis. In Schizosaccharomyces pombe (strain 972 / ATCC 24843) (Fission yeast), this protein is Tropomyosin (cdc8).